The primary structure comprises 3434 residues: Genome polyprotein (3434 aa).

Residues 1–106 are Cytoplasmic-facing; the sequence is MSKKPGGPGR…NRGTKKKRGN (106 aa). The tract at residues 2–15 is interaction with host EXOC1; that stretch reads SKKPGGPGRNRAIN. Residues 37–72 are hydrophobic; homodimerization of capsid protein C; the sequence is LLDGRGPVRFVLALMTFFKFTALAPTKALLGRWKRI. A propeptide spans 105–126 (ER anchor for the capsid protein C, removed in mature form by serine protease NS3); sequence GNNGPGLVMIITLMTVVSMVSS. The chain crosses the membrane as a helical span at residues 107–126; it reads NGPGLVMIITLMTVVSMVSS. At 127–248 the chain is on the extracellular side; that stretch reads LKLSNFQGKV…DSTKASRYLM (122 aa). The N-linked (GlcNAc...) asparagine; by host glycan is linked to N141. A helical membrane pass occupies residues 249 to 273; that stretch reads KTENWIIRNPGYAFVAVLLGWMLGS. Over 274 to 278 the chain is Cytoplasmic; the sequence is NNGQR. Residues 279–293 traverse the membrane as a helical segment; sequence VVFVVLLLLVAPAYS. Residues 294 to 745 lie on the Extracellular side of the membrane; it reads FNCLGMSNRD…QVFGGAFRTL (452 aa). Intrachain disulfides connect C296–C323, C353–C409, C353–C414, C367–C398, C385–C409, C385–C414, C483–C580, and C597–C628. Residues 391–404 form a fusion peptide region; the sequence is DRGWGNGCGLFGKG. A helical membrane pass occupies residues 746 to 766; it reads FGGMSWITQGLMGALLLWMGV. Over 767 to 772 the chain is Cytoplasmic; the sequence is NARDRS. Residues 773-793 form a helical membrane-spanning segment; it reads IALVMLATGGVLLFLATNVHA. The Extracellular portion of the chain corresponds to 794–1218; that stretch reads DSGCAIDVGR…AFAEANSGGD (425 aa). 2 disulfides stabilise this stretch: C797–C808 and C848–C936. N-linked (GlcNAc...) asparagine; by host glycans are attached at residues N923, N968, and N1000. 6 disulfide bridges follow: C972–C1016, C1073–C1122, C1084–C1105, C1084–C1106, C1105–C1109, and C1106–C1109. A helical transmembrane segment spans residues 1219–1239; the sequence is VVHLALIAAFKIQPGFLAMTF. At 1240 to 1249 the chain is on the cytoplasmic side; that stretch reads LRGKWTNQEN. A helical transmembrane segment spans residues 1250–1270; sequence ILLALGAAFFQMAATDLNFSL. At 1271–1286 the chain is on the lumenal side; the sequence is PGILNATATAWMLLRA. A helical transmembrane segment spans residues 1287-1307; the sequence is ATQPSTSAIVMPLLCLLAPGM. Residue R1308 is a topological domain, cytoplasmic. Residues 1309–1329 form a helical membrane-spanning segment; that stretch reads LLYLDTYRITLIIIGICSLIG. Topologically, residues 1330–1340 are lumenal; sequence ERRRAAAKKKG. A helical transmembrane segment spans residues 1341–1361; that stretch reads AVLLGLALTSTGQFSASVMAA. Residues 1362–1373 lie on the Cytoplasmic side of the membrane; that stretch reads GLMACNPNKKRG. A helical membrane pass occupies residues 1374 to 1394; that stretch reads WPATEVLTAVGLMFAIVGGLA. At 1395 to 1397 the chain is on the lumenal side; that stretch reads ELD. A helical membrane pass occupies residues 1398-1418; that stretch reads VDSMSIPFVLAGLMAVSYTIS. At 1419–1475 the chain is on the cytoplasmic side; the sequence is GKSTDLWLERAADITWETDAAITGTSQRLDVKLDDDGDFHLINDPGVPWKIWVIRMT. Positions 1426–1465 are interacts with and activates NS3 protease; that stretch reads LERAADITWETDAAITGTSQRLDVKLDDDGDFHLINDPGV. The segment at residues 1476–1496 is an intramembrane region (helical); the sequence is ALGFAAWTPWAIIPAGIGYWL. Over 1497–2173 the chain is Cytoplasmic; sequence TVKYAKRGGV…MALEELPDAL (677 aa). The Peptidase S7 domain occupies 1504–1681; that stretch reads GGVFWDTPAP…EREEEPVPEA (178 aa). Active-site charge relay system; for serine protease NS3 activity residues include H1554, D1578, and S1638. Residues 1684–1840 enclose the Helicase ATP-binding domain; sequence ADMLRKKQLT…DTNAPVTDIQ (157 aa). The segment at 1688–1691 is important for RNA-binding; the sequence is RKKQ. An ATP-binding site is contributed by 1697–1704; sequence LHPGAGKT. Positions 1788-1791 match the DEAH box motif; sequence DEAH. In terms of domain architecture, Helicase C-terminal spans 1851-2016; sequence GFEWITEYTG…GLVAQMYGPE (166 aa). N6-acetyllysine; by host is present on K1892. The tract at residues 1956–1980 is disordered; the sequence is ASAAQRRGRVGRNPSQIGDEYHYGG. The regulates the ATPase activity of NS3 helicase stretch occupies residues 2167 to 2171; sequence EELPD. A helical membrane pass occupies residues 2174 to 2194; sequence ETITLIVALAVMTAGVFLLLV. Over 2195–2198 the chain is Lumenal; it reads QRRG. The helical intramembrane region spans 2199 to 2219; that stretch reads IGKLGLGGMVLGLATFFLWMA. Residue D2220 is a topological domain, lumenal. The chain crosses the membrane as a helical span at residues 2221–2241; sequence VSGTKIAGTLLLALLMMIVLI. Residues 2242-2256 lie on the Cytoplasmic side of the membrane; the sequence is PEPEKQRSQTDNQLA. Residues 2257 to 2277 form a helical membrane-spanning segment; sequence VFLICVLLVVGVVAANEYGML. The Lumenal portion of the chain corresponds to 2278–2313; sequence ERTKSDLGKIFSSTRQPQSALPLPSMNALALDLRPA. An intramembrane region (helical) is located at residues 2314–2334; sequence TAWALYGGSTVVLTPLIKHLV. Topologically, residues 2335–2368 are lumenal; sequence TSEYITTSLASISAQAGSLFNLPRGLPFTELDFT. The chain crosses the membrane as a helical span at residues 2369–2389; sequence VVLVFLGCWGQVSLTTLITAA. The Cytoplasmic portion of the chain corresponds to 2390–2446; it reads ALATLHYGYMLPGWQAEALRAAQRRTAAGIMKNAVVDGLVATDVPELERTTPLMQKK. The helical transmembrane segment at 2447 to 2467 threads the bilayer; sequence VGQILLIGVSAAALLVNPCVT. Residues 2468–2471 are Lumenal-facing; the sequence is TVRE. Residues 2472–2492 form a helical membrane-spanning segment; that stretch reads AGILISAALLTLWDNGAIAVW. Residues 2493 to 3434 lie on the Cytoplasmic side of the membrane; that stretch reads NSTTATGLCH…EVNVQEDRVL (942 aa). Residues 2530–2795 enclose the mRNA cap 0-1 NS5-type MT domain; sequence GRPGGRTLGE…DVNLGSGTRA (266 aa). Residues 2567–2587 form a disordered region; sequence SAARKARRDGNKTGGHPVSRG. S2585 is a binding site for S-adenosyl-L-methionine. A Phosphoserine modification is found at S2585. K2590 functions as the For 2'-O-MTase activity in the catalytic mechanism. Residues G2615, W2616, T2633, K2634, D2660, and V2661 each contribute to the S-adenosyl-L-methionine site. The For 2'-O-MTase activity role is filled by D2675. Residue I2676 coordinates S-adenosyl-L-methionine. Active-site for 2'-O-MTase activity residues include K2711 and E2747. Position 2749 (Y2749) interacts with S-adenosyl-L-methionine. Positions 2969, 2973, 2978, and 2981 each coordinate Zn(2+). Positions 3059–3211 constitute a RdRp catalytic domain; that stretch reads GKMYADDTAG…KPLDDRFANA (153 aa). Zn(2+) contacts are provided by H3246, C3262, and C3381.

In the N-terminal section; belongs to the class I-like SAM-binding methyltransferase superfamily. mRNA cap 0-1 NS5-type methyltransferase family. Homodimer. Interacts (via N-terminus) with host EXOC1 (via C-terminus); this interaction results in EXOC1 degradation through the proteasome degradation pathway. As to quaternary structure, forms heterodimers with envelope protein E in the endoplasmic reticulum and Golgi. In terms of assembly, homodimer; in the endoplasmic reticulum and Golgi. Interacts with protein prM. Interacts with non-structural protein 1. Homodimer; Homohexamer when secreted. Interacts with envelope protein E. NS1 interacts with NS4B. Interacts with host complement protein CFH; this interaction leads to the degradation of C3. As to quaternary structure, interacts (via N-terminus) with serine protease NS3. In terms of assembly, forms a heterodimer with serine protease NS3. May form homooligomers. Forms a heterodimer with NS2B. Interacts with non-structural protein 2A (via N-terminus). Interacts with NS4B. Interacts with unphosphorylated RNA-directed RNA polymerase NS5; this interaction stimulates RNA-directed RNA polymerase NS5 guanylyltransferase activity. As to quaternary structure, interacts with serine protease NS3. In terms of assembly, homodimer. Interacts with host STAT2; this interaction inhibits the phosphorylation of the latter, and, when all viral proteins are present (polyprotein), targets STAT2 for degradation. Interacts with serine protease NS3. Specific enzymatic cleavages in vivo yield mature proteins. Cleavages in the lumen of endoplasmic reticulum are performed by host signal peptidase, whereas cleavages in the cytoplasmic side are performed by serine protease NS3. Signal cleavage at the 2K-4B site requires a prior NS3 protease-mediated cleavage at the 4A-2K site. Post-translationally, cleaved in post-Golgi vesicles by a host furin, releasing the mature small envelope protein M, and peptide pr. This cleavage is incomplete as up to 30% of viral particles still carry uncleaved prM. In terms of processing, N-glycosylated. N-glycosylated. The excreted form is glycosylated and this is required for efficient secretion of the protein from infected cells. Post-translationally, acetylated by host KAT5. Acetylation modulates NS3 RNA-binding and unwinding activities and plays an important positive role for viral replication. In terms of processing, phosphorylated on serines residues. This phosphorylation may trigger NS5 nuclear localization.

The protein localises to the virion. Its subcellular location is the host nucleus. It is found in the host cytoplasm. The protein resides in the host perinuclear region. It localises to the secreted. The protein localises to the virion membrane. Its subcellular location is the host endoplasmic reticulum membrane. It catalyses the reaction Selective hydrolysis of -Xaa-Xaa-|-Yaa- bonds in which each of the Xaa can be either Arg or Lys and Yaa can be either Ser or Ala.. The enzyme catalyses RNA(n) + a ribonucleoside 5'-triphosphate = RNA(n+1) + diphosphate. It carries out the reaction a ribonucleoside 5'-triphosphate + H2O = a ribonucleoside 5'-diphosphate + phosphate + H(+). The catalysed reaction is ATP + H2O = ADP + phosphate + H(+). It catalyses the reaction a 5'-end (5'-triphosphoguanosine)-ribonucleoside in mRNA + S-adenosyl-L-methionine = a 5'-end (N(7)-methyl 5'-triphosphoguanosine)-ribonucleoside in mRNA + S-adenosyl-L-homocysteine. The enzyme catalyses a 5'-end (N(7)-methyl 5'-triphosphoguanosine)-ribonucleoside in mRNA + S-adenosyl-L-methionine = a 5'-end (N(7)-methyl 5'-triphosphoguanosine)-(2'-O-methyl-ribonucleoside) in mRNA + S-adenosyl-L-homocysteine + H(+). In terms of biological role, plays a role in virus budding by binding to the cell membrane and gathering the viral RNA into a nucleocapsid that forms the core of a mature virus particle. During virus entry, may induce genome penetration into the host cytoplasm after hemifusion induced by the surface proteins. Can migrate to the cell nucleus where it modulates host functions. Overcomes the anti-viral effects of host EXOC1 by sequestering and degrading the latter through the proteasome degradation pathway. Functionally, inhibits RNA silencing by interfering with host Dicer. Prevents premature fusion activity of envelope proteins in trans-Golgi by binding to envelope protein E at pH6.0. After virion release in extracellular space, gets dissociated from E dimers. Its function is as follows. Acts as a chaperone for envelope protein E during intracellular virion assembly by masking and inactivating envelope protein E fusion peptide. prM is the only viral peptide matured by host furin in the trans-Golgi network probably to avoid catastrophic activation of the viral fusion activity in acidic Golgi compartment prior to virion release. prM-E cleavage is inefficient, and many virions are only partially matured. These uncleaved prM would play a role in immune evasion. In terms of biological role, may play a role in virus budding. Exerts cytotoxic effects by activating a mitochondrial apoptotic pathway through M ectodomain. May display a viroporin activity. Functionally, binds to host cell surface receptor and mediates fusion between viral and cellular membranes. Envelope protein is synthesized in the endoplasmic reticulum in the form of heterodimer with protein prM. They play a role in virion budding in the ER, and the newly formed immature particle is covered with 60 spikes composed of heterodimer between precursor prM and envelope protein E. The virion is transported to the Golgi apparatus where the low pH causes dissociation of PrM-E heterodimers and formation of E homodimers. prM-E cleavage is inefficient, and many virions are only partially matured. These uncleaved prM would play a role in immune evasion. Involved in immune evasion, pathogenesis and viral replication. Once cleaved off the polyprotein, is targeted to three destinations: the viral replication cycle, the plasma membrane and the extracellular compartment. Essential for viral replication. Required for formation of the replication complex and recruitment of other non-structural proteins to the ER-derived membrane structures. Excreted as a hexameric lipoparticle that plays a role against host immune response. Antagonizing the complement function. Binds to the host macrophages and dendritic cells. Inhibits signal transduction originating from Toll-like receptor 3 (TLR3). Its function is as follows. Component of the viral RNA replication complex that functions in virion assembly and antagonizes the host alpha/beta interferon antiviral response. In terms of biological role, required cofactor for the serine protease function of NS3. May have membrane-destabilizing activity and form viroporins. Functionally, displays three enzymatic activities: serine protease, NTPase and RNA helicase. NS3 serine protease, in association with NS2B, performs its autocleavage and cleaves the polyprotein at dibasic sites in the cytoplasm: C-prM, NS2A-NS2B, NS2B-NS3, NS3-NS4A, NS4A-2K and NS4B-NS5. NS3 RNA helicase binds RNA and unwinds dsRNA in the 3' to 5' direction. Regulates the ATPase activity of the NS3 helicase activity. NS4A allows NS3 helicase to conserve energy during unwinding. Its function is as follows. Functions as a signal peptide for NS4B and is required for the interferon antagonism activity of the latter. In terms of biological role, induces the formation of ER-derived membrane vesicles where the viral replication takes place. Inhibits interferon (IFN)-induced host STAT1 phosphorylation and nuclear translocation, thereby preventing the establishment of cellular antiviral state by blocking the IFN-alpha/beta pathway. Inhibits STAT2 translocation in the nucleus after IFN-alpha treatment. Functionally, replicates the viral (+) and (-) RNA genome, and performs the capping of genomes in the cytoplasm. NS5 methylates viral RNA cap at guanine N-7 and ribose 2'-O positions. Besides its role in RNA genome replication, also prevents the establishment of cellular antiviral state by blocking the interferon-alpha/beta (IFN-alpha/beta) signaling pathway. Inhibits host TYK2 and STAT2 phosphorylation, thereby preventing activation of JAK-STAT signaling pathway. The chain is Genome polyprotein from Usutu virus (USUV).